A 161-amino-acid polypeptide reads, in one-letter code: Large ribosomal subunit protein uL10 (161 aa).

The protein belongs to the universal ribosomal protein uL10 family. As to quaternary structure, part of the ribosomal stalk of the 50S ribosomal subunit. The N-terminus interacts with L11 and the large rRNA to form the base of the stalk. The C-terminus forms an elongated spine to which L12 dimers bind in a sequential fashion forming a multimeric L10(L12)X complex.

Functionally, forms part of the ribosomal stalk, playing a central role in the interaction of the ribosome with GTP-bound translation factors. The sequence is that of Large ribosomal subunit protein uL10 from Campylobacter curvus (strain 525.92).